We begin with the raw amino-acid sequence, 161 residues long: Cyclic pyranopterin monophosphate synthase (161 aa).

Substrate is bound by residues 75 to 77 (LCH) and 113 to 114 (ME). The active site involves aspartate 128.

The protein belongs to the MoaC family. In terms of assembly, homohexamer; trimer of dimers.

It carries out the reaction (8S)-3',8-cyclo-7,8-dihydroguanosine 5'-triphosphate = cyclic pyranopterin phosphate + diphosphate. It participates in cofactor biosynthesis; molybdopterin biosynthesis. In terms of biological role, catalyzes the conversion of (8S)-3',8-cyclo-7,8-dihydroguanosine 5'-triphosphate to cyclic pyranopterin monophosphate (cPMP). The protein is Cyclic pyranopterin monophosphate synthase of Erwinia tasmaniensis (strain DSM 17950 / CFBP 7177 / CIP 109463 / NCPPB 4357 / Et1/99).